We begin with the raw amino-acid sequence, 156 residues long: Myosin regulatory light chain, striated adductor muscle (156 aa).

Residue A1 is modified to Blocked amino end (Ala). EF-hand domains are found at residues 15 to 50 and 84 to 119; these read KQIQ…LGRT and DTEE…MGDN. Ca(2+) contacts are provided by D28, D30, D32, and D39.

Functionally, in molluscan muscle, calcium regulation is associated with myosin rather than with actin. Muscle myosin contains two types of light chains: the catalytic light chain, essential for ATPase activity, and the regulatory light chain, a calcium-binding protein responsible for Ca(2+) dependent binding and Ca(2+) dependent Mg-ATPase activity. The chain is Myosin regulatory light chain, striated adductor muscle from Mizuhopecten yessoensis (Japanese scallop).